The primary structure comprises 177 residues: Large ribosomal subunit protein uL30 (177 aa).

Belongs to the universal ribosomal protein uL30 family. As to quaternary structure, part of the 50S ribosomal subunit.

This Pyrobaculum islandicum (strain DSM 4184 / JCM 9189 / GEO3) protein is Large ribosomal subunit protein uL30.